Consider the following 560-residue polypeptide: DNA ligase B (560 aa).

Lysine 124 (N6-AMP-lysine intermediate) is an active-site residue.

It belongs to the NAD-dependent DNA ligase family. LigB subfamily.

The enzyme catalyses NAD(+) + (deoxyribonucleotide)n-3'-hydroxyl + 5'-phospho-(deoxyribonucleotide)m = (deoxyribonucleotide)n+m + AMP + beta-nicotinamide D-nucleotide.. Catalyzes the formation of phosphodiester linkages between 5'-phosphoryl and 3'-hydroxyl groups in double-stranded DNA using NAD as a coenzyme and as the energy source for the reaction. The sequence is that of DNA ligase B from Escherichia coli (strain ATCC 8739 / DSM 1576 / NBRC 3972 / NCIMB 8545 / WDCM 00012 / Crooks).